Reading from the N-terminus, the 207-residue chain is MIGLISGQVQYLMAPTACVMTTSGIGYDIELPLPSFCQLRLNEQASIWTHFHVREDAQLLYGFIDRKERDVFRQLIKINGVGAKMALAMLSAMSAAELKMHVEQESETALTRIPGIGKKTAQRLLIELKDKLKNIEVDNSNLEFAIQPAPISAEDSIIAEVEGALMSLGYKEKEAQQAIKAAKSNGETFADTQSLLKATLQQFQSFK.

Residues 1–64 (MIGLISGQVQ…EDAQLLYGFI (64 aa)) are domain I. Positions 65-143 (DRKERDVFRQ…NIEVDNSNLE (79 aa)) are domain II. The interval 144-152 (FAIQPAPIS) is flexible linker. A domain III region spans residues 153-207 (AEDSIIAEVEGALMSLGYKEKEAQQAIKAAKSNGETFADTQSLLKATLQQFQSFK).

This sequence belongs to the RuvA family. As to quaternary structure, homotetramer. Forms an RuvA(8)-RuvB(12)-Holliday junction (HJ) complex. HJ DNA is sandwiched between 2 RuvA tetramers; dsDNA enters through RuvA and exits via RuvB. An RuvB hexamer assembles on each DNA strand where it exits the tetramer. Each RuvB hexamer is contacted by two RuvA subunits (via domain III) on 2 adjacent RuvB subunits; this complex drives branch migration. In the full resolvosome a probable DNA-RuvA(4)-RuvB(12)-RuvC(2) complex forms which resolves the HJ.

The protein localises to the cytoplasm. In terms of biological role, the RuvA-RuvB-RuvC complex processes Holliday junction (HJ) DNA during genetic recombination and DNA repair, while the RuvA-RuvB complex plays an important role in the rescue of blocked DNA replication forks via replication fork reversal (RFR). RuvA specifically binds to HJ cruciform DNA, conferring on it an open structure. The RuvB hexamer acts as an ATP-dependent pump, pulling dsDNA into and through the RuvAB complex. HJ branch migration allows RuvC to scan DNA until it finds its consensus sequence, where it cleaves and resolves the cruciform DNA. In Psychrobacter arcticus (strain DSM 17307 / VKM B-2377 / 273-4), this protein is Holliday junction branch migration complex subunit RuvA.